Reading from the N-terminus, the 356-residue chain is NADH-quinone oxidoreductase subunit H (356 aa).

Transmembrane regions (helical) follow at residues 16 to 36 (IAVL…AFLL), 52 to 72 (PNVV…KFVF), 85 to 105 (LYLL…AVVP), 117 to 137 (VGIL…IIGG), 163 to 183 (IGFI…SEII), 201 to 221 (WPMP…ISAL), 254 to 274 (FMVG…ILFF), 295 to 315 (AWYF…FAMV), and 334 to 354 (IFLP…VYGP).

The protein belongs to the complex I subunit 1 family. NDH-1 is composed of 14 different subunits. Subunits NuoA, H, J, K, L, M, N constitute the membrane sector of the complex.

The protein resides in the cell inner membrane. The catalysed reaction is a quinone + NADH + 5 H(+)(in) = a quinol + NAD(+) + 4 H(+)(out). Functionally, NDH-1 shuttles electrons from NADH, via FMN and iron-sulfur (Fe-S) centers, to quinones in the respiratory chain. The immediate electron acceptor for the enzyme in this species is believed to be ubiquinone. Couples the redox reaction to proton translocation (for every two electrons transferred, four hydrogen ions are translocated across the cytoplasmic membrane), and thus conserves the redox energy in a proton gradient. This subunit may bind ubiquinone. The polypeptide is NADH-quinone oxidoreductase subunit H (Maricaulis maris (strain MCS10) (Caulobacter maris)).